The following is a 174-amino-acid chain: Crossover junction endodeoxyribonuclease RuvC (174 aa).

Catalysis depends on residues Asp-8, Glu-69, and Asp-141. 3 residues coordinate Mg(2+): Asp-8, Glu-69, and Asp-141.

It belongs to the RuvC family. In terms of assembly, homodimer which binds Holliday junction (HJ) DNA. The HJ becomes 2-fold symmetrical on binding to RuvC with unstacked arms; it has a different conformation from HJ DNA in complex with RuvA. In the full resolvosome a probable DNA-RuvA(4)-RuvB(12)-RuvC(2) complex forms which resolves the HJ. It depends on Mg(2+) as a cofactor.

Its subcellular location is the cytoplasm. It catalyses the reaction Endonucleolytic cleavage at a junction such as a reciprocal single-stranded crossover between two homologous DNA duplexes (Holliday junction).. The RuvA-RuvB-RuvC complex processes Holliday junction (HJ) DNA during genetic recombination and DNA repair. Endonuclease that resolves HJ intermediates. Cleaves cruciform DNA by making single-stranded nicks across the HJ at symmetrical positions within the homologous arms, yielding a 5'-phosphate and a 3'-hydroxyl group; requires a central core of homology in the junction. The consensus cleavage sequence is 5'-(A/T)TT(C/G)-3'. Cleavage occurs on the 3'-side of the TT dinucleotide at the point of strand exchange. HJ branch migration catalyzed by RuvA-RuvB allows RuvC to scan DNA until it finds its consensus sequence, where it cleaves and resolves the cruciform DNA. This is Crossover junction endodeoxyribonuclease RuvC from Xanthomonas campestris pv. campestris (strain 8004).